A 349-amino-acid chain; its full sequence is MKFSDIISKLEVTNYSLTQNPNNDPEITGMAAIDEATSGTLSYIEGAKFASFIAKTNASALILPQNEAMQAQAQERGIVWMATPEPRLLFAKAIALFYQPYTPTPEIHPTAVIHPTAKIGNDVYIGPHVVIQPGVEIGNGVIIHPNVVIYPGVKIGDRTILHANCTIEERSQIGADCVIHSGAVIGGEGFGFVPTRTGWYKMEQSGYVVLEDRVDIGCNTTIDRPSVGETRVGYDTKIDNLVQIAHGCQIGAGCAIAAQTGMAGGVKLGNRVILAGQVGIANQAKMGDGSTASAQTGILHDVKPGEVVSGTPAIPHKMYLKIAALYSRLPDMYQAFRQSQRQLEEEGKR.

Catalysis depends on histidine 246, which acts as the Proton acceptor.

It belongs to the transferase hexapeptide repeat family. LpxD subfamily. In terms of assembly, homotrimer.

The catalysed reaction is a UDP-3-O-[(3R)-3-hydroxyacyl]-alpha-D-glucosamine + a (3R)-hydroxyacyl-[ACP] = a UDP-2-N,3-O-bis[(3R)-3-hydroxyacyl]-alpha-D-glucosamine + holo-[ACP] + H(+). Its pathway is bacterial outer membrane biogenesis; LPS lipid A biosynthesis. In terms of biological role, catalyzes the N-acylation of UDP-3-O-acylglucosamine using 3-hydroxyacyl-ACP as the acyl donor. Is involved in the biosynthesis of lipid A, a phosphorylated glycolipid that anchors the lipopolysaccharide to the outer membrane of the cell. In Trichormus variabilis (strain ATCC 29413 / PCC 7937) (Anabaena variabilis), this protein is UDP-3-O-acylglucosamine N-acyltransferase.